The primary structure comprises 422 residues: Histidine--tRNA ligase (422 aa).

Belongs to the class-II aminoacyl-tRNA synthetase family. As to quaternary structure, homodimer.

The protein resides in the cytoplasm. It carries out the reaction tRNA(His) + L-histidine + ATP = L-histidyl-tRNA(His) + AMP + diphosphate + H(+). The polypeptide is Histidine--tRNA ligase (Vibrio cholerae serotype O1 (strain ATCC 39541 / Classical Ogawa 395 / O395)).